The chain runs to 202 residues: MSRYRGPRVRIIRRLGALPGLTNKTPQLKSSSITQSTSNKKISQYRIRLEEKQKLRFHYGITERQLLNYVRIARKAKGSTGEVLLQLLEMRLDNVIFRLGMFPTIPGARQLVNHRHILVNGPIVDIPSYQCKPQDFITIKNQQKSEAIISKNIEFYQKYKIPNHLTYNYLEKKGLVNQILDRESIGLKINELLVVEYYSRQA.

The S4 RNA-binding domain maps to 90–153 (MRLDNVIFRL…KSEAIISKNI (64 aa)).

The protein belongs to the universal ribosomal protein uS4 family. Part of the 30S ribosomal subunit. Contacts protein S5. The interaction surface between S4 and S5 is involved in control of translational fidelity.

The protein localises to the plastid. The protein resides in the chloroplast. Functionally, one of the primary rRNA binding proteins, it binds directly to 16S rRNA where it nucleates assembly of the body of the 30S subunit. In terms of biological role, with S5 and S12 plays an important role in translational accuracy. This Cyathophorum bulbosum (Moss) protein is Small ribosomal subunit protein uS4c (rps4).